Here is a 174-residue protein sequence, read N- to C-terminus: Small ribosomal subunit protein uS5 (174 aa).

An S5 DRBM domain is found at 20-83 (IEDQLVAINR…EAGKKRMIKV (64 aa)).

The protein belongs to the universal ribosomal protein uS5 family. Part of the 30S ribosomal subunit. Contacts proteins S4 and S8.

In terms of biological role, with S4 and S12 plays an important role in translational accuracy. Located at the back of the 30S subunit body where it stabilizes the conformation of the head with respect to the body. This chain is Small ribosomal subunit protein uS5, found in Lactobacillus gasseri (strain ATCC 33323 / DSM 20243 / BCRC 14619 / CIP 102991 / JCM 1131 / KCTC 3163 / NCIMB 11718 / NCTC 13722 / AM63).